The chain runs to 967 residues: Sulfite dehydrogenase subunit A (967 aa).

In terms of domain architecture, 4Fe-4S Mo/W bis-MGD-type spans 15 to 71; sequence VEVKETTCYMCACRCGIRVHLRDGEVRYIDGNPNHPLNKGVICAKGSSGIMKQYSPG. The [4Fe-4S] cluster site is built by C22, C25, C29, and C57.

This sequence belongs to the prokaryotic molybdopterin-containing oxidoreductase family. Forms a heterotrimeric membrane-bound complex composed of a catalytic heterodimer (SoeAB) and a membrane anchor protein (SoeC). It depends on [4Fe-4S] cluster as a cofactor. The cofactor is Mo-bis(molybdopterin guanine dinucleotide).

It localises to the cell inner membrane. It catalyses the reaction a quinone + sulfite + H2O = a quinol + sulfate. The catalysed reaction is a menaquinone + sulfite + H2O = a menaquinol + sulfate. Part of the SoeABC complex that catalyzes the oxidation of sulfite to sulfate. This is Sulfite dehydrogenase subunit A from Allochromatium vinosum (strain ATCC 17899 / DSM 180 / NBRC 103801 / NCIMB 10441 / D) (Chromatium vinosum).